The primary structure comprises 78 residues: Sec-independent protein translocase protein TatA (78 aa).

The helical transmembrane segment at 1–21 threads the bilayer; sequence MGSLSIWHWLIVLLIVALVFG. Composition is skewed to basic and acidic residues over residues 39 to 57 and 65 to 78; these read FKEGMKDGETPEGQQRDQL and VDAKEKAPHSGDSR. The interval 39–78 is disordered; sequence FKEGMKDGETPEGQQRDQLSRTNTVDVDAKEKAPHSGDSR.

This sequence belongs to the TatA/E family. The Tat system comprises two distinct complexes: a TatABC complex, containing multiple copies of TatA, TatB and TatC subunits, and a separate TatA complex, containing only TatA subunits. Substrates initially bind to the TatABC complex, which probably triggers association of the separate TatA complex to form the active translocon.

The protein localises to the cell inner membrane. In terms of biological role, part of the twin-arginine translocation (Tat) system that transports large folded proteins containing a characteristic twin-arginine motif in their signal peptide across membranes. TatA could form the protein-conducting channel of the Tat system. This is Sec-independent protein translocase protein TatA from Paraburkholderia phymatum (strain DSM 17167 / CIP 108236 / LMG 21445 / STM815) (Burkholderia phymatum).